The following is a 193-amino-acid chain: NAD(P)H-quinone oxidoreductase subunit I (193 aa).

4Fe-4S ferredoxin-type domains lie at 56–85 (GRIH…VDWE) and 96–125 (KHYS…MTEE). 8 residues coordinate [4Fe-4S] cluster: C65, C68, C71, C75, C105, C108, C111, and C115. Residues 174–193 (NLPKGSQRAGQHPEDLVKAE) form a disordered region. A compositionally biased stretch (basic and acidic residues) spans 184–193 (QHPEDLVKAE).

It belongs to the complex I 23 kDa subunit family. As to quaternary structure, NDH-1 is composed of at least 11 different subunits. Requires [4Fe-4S] cluster as cofactor.

It localises to the cellular thylakoid membrane. It catalyses the reaction a plastoquinone + NADH + (n+1) H(+)(in) = a plastoquinol + NAD(+) + n H(+)(out). The enzyme catalyses a plastoquinone + NADPH + (n+1) H(+)(in) = a plastoquinol + NADP(+) + n H(+)(out). NDH-1 shuttles electrons from an unknown electron donor, via FMN and iron-sulfur (Fe-S) centers, to quinones in the respiratory and/or the photosynthetic chain. The immediate electron acceptor for the enzyme in this species is believed to be plastoquinone. Couples the redox reaction to proton translocation, and thus conserves the redox energy in a proton gradient. The protein is NAD(P)H-quinone oxidoreductase subunit I of Synechocystis sp. (strain ATCC 27184 / PCC 6803 / Kazusa).